We begin with the raw amino-acid sequence, 328 residues long: DNA-directed RNA polymerase subunit alpha (328 aa).

The alpha N-terminal domain (alpha-NTD) stretch occupies residues 1–232; it reads MSTQGFLKPR…DQISVFAALE (232 aa). An alpha C-terminal domain (alpha-CTD) region spans residues 248 to 328; it reads IDPVLLRPVD…NWPPLGLERP (81 aa).

The protein belongs to the RNA polymerase alpha chain family. In terms of assembly, homodimer. The RNAP catalytic core consists of 2 alpha, 1 beta, 1 beta' and 1 omega subunit. When a sigma factor is associated with the core the holoenzyme is formed, which can initiate transcription.

It carries out the reaction RNA(n) + a ribonucleoside 5'-triphosphate = RNA(n+1) + diphosphate. Functionally, DNA-dependent RNA polymerase catalyzes the transcription of DNA into RNA using the four ribonucleoside triphosphates as substrates. This chain is DNA-directed RNA polymerase subunit alpha, found in Bordetella avium (strain 197N).